Here is a 334-residue protein sequence, read N- to C-terminus: Biotin synthase (334 aa).

A Radical SAM core domain is found at 55–285; that stretch reads GEGGGVHACS…AHPSKIIKFA (231 aa). Residues Cys73, Cys77, and Cys80 each coordinate [4Fe-4S] cluster. The [2Fe-2S] cluster site is built by Cys152, Cys213, and Lys283.

This sequence belongs to the radical SAM superfamily. Biotin synthase family. Homodimer. Requires [4Fe-4S] cluster as cofactor. [2Fe-2S] cluster serves as cofactor.

The catalysed reaction is (4R,5S)-dethiobiotin + (sulfur carrier)-SH + 2 reduced [2Fe-2S]-[ferredoxin] + 2 S-adenosyl-L-methionine = (sulfur carrier)-H + biotin + 2 5'-deoxyadenosine + 2 L-methionine + 2 oxidized [2Fe-2S]-[ferredoxin]. Its pathway is cofactor biosynthesis; biotin biosynthesis; biotin from 7,8-diaminononanoate: step 2/2. Its function is as follows. Catalyzes the conversion of dethiobiotin (DTB) to biotin by the insertion of a sulfur atom into dethiobiotin via a radical-based mechanism. This Chlorobaculum parvum (strain DSM 263 / NCIMB 8327) (Chlorobium vibrioforme subsp. thiosulfatophilum) protein is Biotin synthase.